A 788-amino-acid polypeptide reads, in one-letter code: Protein translocase subunit SecA 2 (788 aa).

Residues Gln86, 104-108, and Asp493 contribute to the ATP site; that span reads GEGKT.

This sequence belongs to the SecA family. As to quaternary structure, monomer and homodimer. Part of the essential Sec protein translocation apparatus which comprises SecA, SecYEG and auxiliary proteins SecDF. Other proteins may also be involved.

It is found in the cell membrane. Its subcellular location is the cytoplasm. The catalysed reaction is ATP + H2O + cellular proteinSide 1 = ADP + phosphate + cellular proteinSide 2.. Functionally, part of the Sec protein translocase complex. Interacts with the SecYEG preprotein conducting channel. Has a central role in coupling the hydrolysis of ATP to the transfer of proteins into and across the cell membrane, serving as an ATP-driven molecular motor driving the stepwise translocation of polypeptide chains across the membrane. This chain is Protein translocase subunit SecA 2, found in Bacillus cereus (strain ZK / E33L).